The following is a 751-amino-acid chain: Photosystem I P700 chlorophyll a apoprotein A1 (751 aa).

8 consecutive transmembrane segments (helical) span residues 73–96 (IFSA…FHGA), 159–182 (LYCT…FHYH), 198–222 (MNHH…HLSL), 294–312 (TAHH…GHMY), 349–372 (WHAQ…HHMY), 388–414 (LSLF…IFMV), 435–457 (AIVS…LYIH), and 532–550 (FLVH…LILV). Positions 574 and 583 each coordinate [4Fe-4S] cluster. The next 2 membrane-spanning stretches (helical) occupy residues 590–611 (HVFL…HFSW) and 665–687 (LSAY…MFLF). Chlorophyll a' is bound at residue H676. The chlorophyll a site is built by M684 and Y692. W693 contacts phylloquinone. The chain crosses the membrane as a helical span at residues 725–745 (AVGVAHYLLGGIGTTWAFFLA).

It belongs to the PsaA/PsaB family. The PsaA/B heterodimer binds the P700 chlorophyll special pair and subsequent electron acceptors. PSI consists of a core antenna complex that captures photons, and an electron transfer chain that converts photonic excitation into a charge separation. The eukaryotic PSI reaction center is composed of at least 11 subunits. P700 is a chlorophyll a/chlorophyll a' dimer, A0 is one or more chlorophyll a, A1 is one or both phylloquinones and FX is a shared 4Fe-4S iron-sulfur center. is required as a cofactor.

The protein localises to the plastid. The protein resides in the chloroplast thylakoid membrane. It catalyses the reaction reduced [plastocyanin] + hnu + oxidized [2Fe-2S]-[ferredoxin] = oxidized [plastocyanin] + reduced [2Fe-2S]-[ferredoxin]. Its function is as follows. PsaA and PsaB bind P700, the primary electron donor of photosystem I (PSI), as well as the electron acceptors A0, A1 and FX. PSI is a plastocyanin/cytochrome c6-ferredoxin oxidoreductase, converting photonic excitation into a charge separation, which transfers an electron from the donor P700 chlorophyll pair to the spectroscopically characterized acceptors A0, A1, FX, FA and FB in turn. Oxidized P700 is reduced on the lumenal side of the thylakoid membrane by plastocyanin or cytochrome c6. The chain is Photosystem I P700 chlorophyll a apoprotein A1 from Pyropia yezoensis (Susabi-nori).